The primary structure comprises 154 residues: Peptide deformylase (154 aa).

The Fe cation site is built by cysteine 90 and histidine 132. Glutamate 133 is a catalytic residue. Histidine 136 serves as a coordination point for Fe cation.

This sequence belongs to the polypeptide deformylase family. Requires Fe(2+) as cofactor.

The enzyme catalyses N-terminal N-formyl-L-methionyl-[peptide] + H2O = N-terminal L-methionyl-[peptide] + formate. Its function is as follows. Removes the formyl group from the N-terminal Met of newly synthesized proteins. Requires at least a dipeptide for an efficient rate of reaction. N-terminal L-methionine is a prerequisite for activity but the enzyme has broad specificity at other positions. The protein is Peptide deformylase of Desulforudis audaxviator (strain MP104C).